Consider the following 47-residue polypeptide: ATP-dependent zinc metalloprotease FTSH, chloroplastic (47 aa).

The protein in the N-terminal section; belongs to the AAA ATPase family. It in the C-terminal section; belongs to the peptidase M41 family. It depends on Zn(2+) as a cofactor.

It localises to the plastid. The protein localises to the chloroplast membrane. Seems to act as an ATP-dependent zinc metallopeptidase. The sequence is that of ATP-dependent zinc metalloprotease FTSH, chloroplastic from Populus euphratica (Euphrates poplar).